We begin with the raw amino-acid sequence, 326 residues long: Olfactory receptor 8A1 (326 aa).

Residues 1 to 45 (MGFLSPMHPCRPPTQRRMAAGNHSTVTEFILKGLTKRADLQLPLF) lie on the Extracellular side of the membrane. A glycan (N-linked (GlcNAc...) asparagine) is linked at N22. A helical membrane pass occupies residues 46–66 (LLFLGIYLVTIVGNLGMITLI). Topologically, residues 67 to 77 (CLNSQLHTPMY) are cytoplasmic. Residues 78–100 (YFLSNLSLMDLCYSSVITPKMLV) form a helical membrane-spanning segment. Over 101 to 116 (NFVSEKNIISYAGCMS) the chain is Extracellular. C114 and C195 form a disulfide bridge. The chain crosses the membrane as a helical span at residues 117 to 137 (QLYFFLVFVIAECYMLTVMAY). Residues 138–150 (DRYVAICHPLLYN) are Cytoplasmic-facing. The chain crosses the membrane as a helical span at residues 151–171 (IIMSHHTCLLLVAVVYAIGLI). Over 172–222 (GSTIETGLMLKLPYCEHLISHYFCDILPLMKLSCSSTYDVEMTVFFSAGFN) the chain is Extracellular. Residues 223-243 (IIVTSLTVLVSYTFILSSILG) form a helical membrane-spanning segment. Residues 244-260 (ISTTEGRSKAFSTCSSH) are Cytoplasmic-facing. Residues 261 to 281 (LAAVGMFYGSTAFMYLKPSTI) traverse the membrane as a helical segment. Residues 282–287 (SSLTQE) lie on the Extracellular side of the membrane. The chain crosses the membrane as a helical span at residues 288–308 (NVASVFYTTVIPMLNPLIYSL). Residues 309 to 326 (RNKEVKAAVQKTLRGKLF) lie on the Cytoplasmic side of the membrane.

Belongs to the G-protein coupled receptor 1 family.

The protein resides in the cell membrane. Functionally, odorant receptor. The polypeptide is Olfactory receptor 8A1 (OR8A1) (Homo sapiens (Human)).